The sequence spans 511 residues: Maturase K (511 aa).

Belongs to the intron maturase 2 family. MatK subfamily.

The protein resides in the plastid. It is found in the chloroplast. In terms of biological role, usually encoded in the trnK tRNA gene intron. Probably assists in splicing its own and other chloroplast group II introns. The chain is Maturase K from Chloranthus spicatus (Chulantree).